Reading from the N-terminus, the 116-residue chain is Large ribosomal subunit protein eL22B (116 aa).

It belongs to the eukaryotic ribosomal protein eL22 family.

The polypeptide is Large ribosomal subunit protein eL22B (rpl22a) (Dictyostelium discoideum (Social amoeba)).